The primary structure comprises 196 residues: uncharacterized protein (196 aa).

2 consecutive CBS domains span residues Ala10–Glu69 and Met76–Thr132. The region spanning Ile153–Arg187 is the ACP-type MB domain. Fe cation contacts are provided by Cys158, Cys161, Cys177, and Cys180. Zn(2+)-binding residues include Cys158, Cys161, Cys177, and Cys180.

This is an uncharacterized protein from Methanopyrus kandleri (strain AV19 / DSM 6324 / JCM 9639 / NBRC 100938).